The following is a 39-amino-acid chain: Omega-theraphotoxin-Ba1a (39 aa).

Intrachain disulfides connect Cys4–Cys25, Cys8–Cys31, and Cys17–Cys36.

Belongs to the neurotoxin 12 (Hwtx-2) family. 06 (TXP1) subfamily. As to expression, expressed by the venom gland.

It is found in the secreted. Its function is as follows. Inhibits voltage-gated calcium channels (Cav) in rat cerebellar granule cells. Has insecticidal activity to crickets (Acheta domesticus). Is not toxic to mice. This Brachypelma albiceps (Mexican golden redrump tarantula) protein is Omega-theraphotoxin-Ba1a.